A 574-amino-acid polypeptide reads, in one-letter code: uncharacterized protein (574 aa).

The disordered stretch occupies residues Ser-297 to Ser-327. Polar residues predominate over residues Ala-313–Ser-327.

This is an uncharacterized protein from Macaca fascicularis (Crab-eating macaque).